The sequence spans 483 residues: Probable glycine dehydrogenase (decarboxylating) subunit 2 (483 aa).

K267 carries the post-translational modification N6-(pyridoxal phosphate)lysine.

Belongs to the GcvP family. C-terminal subunit subfamily. In terms of assembly, the glycine cleavage system is composed of four proteins: P, T, L and H. In this organism, the P 'protein' is a heterodimer of two subunits. Pyridoxal 5'-phosphate is required as a cofactor.

It carries out the reaction N(6)-[(R)-lipoyl]-L-lysyl-[glycine-cleavage complex H protein] + glycine + H(+) = N(6)-[(R)-S(8)-aminomethyldihydrolipoyl]-L-lysyl-[glycine-cleavage complex H protein] + CO2. The glycine cleavage system catalyzes the degradation of glycine. The P protein binds the alpha-amino group of glycine through its pyridoxal phosphate cofactor; CO(2) is released and the remaining methylamine moiety is then transferred to the lipoamide cofactor of the H protein. In Kosmotoga olearia (strain ATCC BAA-1733 / DSM 21960 / TBF 19.5.1), this protein is Probable glycine dehydrogenase (decarboxylating) subunit 2.